Consider the following 465-residue polypeptide: Chromosomal replication initiator protein DnaA (465 aa).

Residues 1-72 (MRTKQLWQVA…ETLSLLLGRP (72 aa)) form a domain I, interacts with DnaA modulators region. Positions 72–117 (PIAVHFTVHGQDDEEHPVQRRPQRRALASEEGSASKQLSLTPSPEH) are domain II. The disordered stretch occupies residues 80–118 (HGQDDEEHPVQRRPQRRALASEEGSASKQLSLTPSPEHG). Over residues 103–113 (GSASKQLSLTP) the composition is skewed to polar residues. Residues 118-334 (GLNPRYTFEK…GALNRIVALA (217 aa)) form a domain III, AAA+ region region. ATP is bound by residues Gly-162, Gly-164, Lys-165, and Thr-166. The segment at 335–465 (QLTHQPITLA…DAKAPLASRH (131 aa)) is domain IV, binds dsDNA.

Belongs to the DnaA family. In terms of assembly, oligomerizes as a right-handed, spiral filament on DNA at oriC.

The protein localises to the cytoplasm. Functionally, plays an essential role in the initiation and regulation of chromosomal replication. ATP-DnaA binds to the origin of replication (oriC) to initiate formation of the DNA replication initiation complex once per cell cycle. Binds the DnaA box (a 9 base pair repeat at the origin) and separates the double-stranded (ds)DNA. Forms a right-handed helical filament on oriC DNA; dsDNA binds to the exterior of the filament while single-stranded (ss)DNA is stabiized in the filament's interior. The ATP-DnaA-oriC complex binds and stabilizes one strand of the AT-rich DNA unwinding element (DUE), permitting loading of DNA polymerase. After initiation quickly degrades to an ADP-DnaA complex that is not apt for DNA replication. Binds acidic phospholipids. This Thermomicrobium roseum (strain ATCC 27502 / DSM 5159 / P-2) protein is Chromosomal replication initiator protein DnaA.